Consider the following 263-residue polypeptide: Peptidoglycan-N-acetylmuramic acid deacetylase PdaA (263 aa).

A signal peptide spans 1-23; it reads MKWMCSICCAAVLLAGGAAQAEA. A NodB homology domain is found at 66-247; that stretch reads KTIYLTFDNG…DLKKQGYTFK (182 aa). The active-site Proton acceptor is Asp-73. Positions 124 and 128 each coordinate a divalent metal cation. The Proton donor role is filled by His-222.

The protein belongs to the polysaccharide deacetylase family.

Catalyzes the deacetylation of N-acetylmuramic acid (MurNAc) residues in glycan strands of peptidoglycan, leading to the formation of muramic delta-lactam residues in spore cortex, after transpeptidation of deacetylated muramic acid residues. PdaA probably carries out both deacetylation and lactam ring formation and requires the product of CwlD activity on peptidoglycan as a substrate. Is required for germination. Cannot use chitin oligomer (hexa-N-acetylchitohexaose) as a substrate. The polypeptide is Peptidoglycan-N-acetylmuramic acid deacetylase PdaA (pdaA) (Bacillus subtilis (strain 168)).